The following is a 135-amino-acid chain: Protein KRTCAP2 homolog (135 aa).

4 helical membrane passes run 1–21 (MAVS…LLFA), 35–55 (PMAI…LTAI), 69–89 (TKLI…SGMV), and 93–113 (CITT…RISI).

This sequence belongs to the KRTCAP2 family. Component of the oligosaccharyltransferase (OST) complex.

It localises to the membrane. Its function is as follows. Subunit of the oligosaccharyl transferase (OST) complex that catalyzes the initial transfer of a defined glycan (Glc(3)Man(9)GlcNAc(2) in eukaryotes) from the lipid carrier dolichol-pyrophosphate to an asparagine residue within an Asn-X-Ser/Thr consensus motif in nascent polypeptide chains, the first step in protein N-glycosylation. N-glycosylation occurs cotranslationally and the complex associates with the Sec61 complex at the channel-forming translocon complex that mediates protein translocation across the endoplasmic reticulum (ER). All subunits are required for a maximal enzyme activity. This chain is Protein KRTCAP2 homolog, found in Ixodes scapularis (Black-legged tick).